Consider the following 200-residue polypeptide: Protein GrpE (200 aa).

It belongs to the GrpE family. Homodimer.

It localises to the cytoplasm. Functionally, participates actively in the response to hyperosmotic and heat shock by preventing the aggregation of stress-denatured proteins, in association with DnaK and GrpE. It is the nucleotide exchange factor for DnaK and may function as a thermosensor. Unfolded proteins bind initially to DnaJ; upon interaction with the DnaJ-bound protein, DnaK hydrolyzes its bound ATP, resulting in the formation of a stable complex. GrpE releases ADP from DnaK; ATP binding to DnaK triggers the release of the substrate protein, thus completing the reaction cycle. Several rounds of ATP-dependent interactions between DnaJ, DnaK and GrpE are required for fully efficient folding. In Mycoplasma mycoides subsp. mycoides SC (strain CCUG 32753 / NCTC 10114 / PG1), this protein is Protein GrpE.